We begin with the raw amino-acid sequence, 757 residues long: Mitofusin-2 (757 aa).

Topologically, residues 1 to 604 (MSLLFSRCNS…TQEELMVSMV (604 aa)) are cytoplasmic. The tract at residues 30-94 (KHFVTAKKKI…VRGISEVLAR (65 aa)) is part of a helix bundle domain, formed by helices from N-terminal and C-terminal regions. Residues 93–342 (ARRHMKVAFF…VRMFEFQNFE (250 aa)) enclose the Dynamin-type G domain. The tract at residues 103 to 110 (GRTSNGKS) is G1 motif. 106–111 (SNGKST) lines the GTP pocket. Thr-111 is subject to Phosphothreonine; by PINK1. The interval 129–130 (TT) is G2 motif. A G3 motif region spans residues 199-202 (DSPG). 258 to 261 (NRWD) contributes to the GTP binding site. Residues 258–261 (NRWD) form a G4 motif region. Glu-288 is a region of interest (G5 motif). 2 residues coordinate GTP: Ser-305 and Lys-307. Positions 359–385 (EQHTVRAKQIAEAVRLIMDSLHIAAQE) are part of a helix bundle domain, formed by helices from N-terminal and C-terminal regions. Residues 406-434 (KQLELLAQDYKLRIKQITEEVERQVSTAM) are a coiled coil. Ser-442 carries the phosphoserine modification. Residues 605–625 (TGLASLTSRTSMGILVVGGVV) form a helical membrane-spanning segment. A topological domain (mitochondrial intermembrane) is located at residue Trp-626. The helical transmembrane segment at 627 to 647 (KAVGWRLIALSFGLYGLLYVY) threads the bilayer. Residues 648-757 (ERLTWTTKAK…FTHQYLQPSR (110 aa)) lie on the Cytoplasmic side of the membrane. A coiled-coil region spans residues 696–738 (FAHLCQQVDITRDNLEQEIAAMNKKVEALDSLQSRAKLLRNKA). The part of a helix bundle domain, formed by helices from N-terminal and C-terminal regions stretch occupies residues 722–753 (EALDSLQSRAKLLRNKAGWLDSELNMFTHQYL).

The protein belongs to the TRAFAC class dynamin-like GTPase superfamily. Dynamin/Fzo/YdjA family. Mitofusin subfamily. Forms homomultimers and heteromultimers with MFN1. Oligomerization is essential for mitochondrion fusion. Interacts with VAT1. Interacts with STOML2; may form heterooligomers. Interacts (phosphorylated) with PRKN. Interacts with EIF2AK3. Interacts with THG1L; THG1L probably functions as a guanyl-nucleotide exchange factor/GEF, activating MFN2. In terms of processing, phosphorylated by PINK1. Post-translationally, ubiquitinated by non-degradative ubiquitin by PRKN, promoting mitochondrial fusion; deubiquitination by USP30 inhibits mitochondrial fusion. Ubiquitinated by HUWE1 when dietary stearate (C18:0) levels are low; ubiquitination inhibits mitochondrial fusion. As to expression, ubiquitous. Expression is markedly reduced in ApoE-knockout mouse atherosclerotic arteries.

It localises to the mitochondrion outer membrane. The enzyme catalyses GTP + H2O = GDP + phosphate + H(+). Functionally, mitochondrial outer membrane GTPase that mediates mitochondrial clustering and fusion. Mitochondria are highly dynamic organelles, and their morphology is determined by the equilibrium between mitochondrial fusion and fission events. Overexpression induces the formation of mitochondrial networks. Membrane clustering requires GTPase activity and may involve a major rearrangement of the coiled coil domains. Plays a central role in mitochondrial metabolism and may be associated with obesity and/or apoptosis processes. Plays an important role in the regulation of vascular smooth muscle cell proliferation. Involved in the clearance of damaged mitochondria via selective autophagy (mitophagy). Is required for PRKN recruitment to dysfunctional mitochondria. Involved in the control of unfolded protein response (UPR) upon ER stress including activation of apoptosis and autophagy during ER stress. Acts as an upstream regulator of EIF2AK3 and suppresses EIF2AK3 activation under basal conditions. The sequence is that of Mitofusin-2 (Mfn2) from Mus musculus (Mouse).